A 163-amino-acid chain; its full sequence is NADH-quinone oxidoreductase subunit I (163 aa).

2 4Fe-4S ferredoxin-type domains span residues 54–84 and 94–123; these read LRRY…IESE and TRYD…ETRI. 8 residues coordinate [4Fe-4S] cluster: Cys64, Cys67, Cys70, Cys74, Cys103, Cys106, Cys109, and Cys113.

This sequence belongs to the complex I 23 kDa subunit family. In terms of assembly, NDH-1 is composed of 14 different subunits. Subunits NuoA, H, J, K, L, M, N constitute the membrane sector of the complex. [4Fe-4S] cluster is required as a cofactor.

The protein resides in the cell inner membrane. It carries out the reaction a quinone + NADH + 5 H(+)(in) = a quinol + NAD(+) + 4 H(+)(out). In terms of biological role, NDH-1 shuttles electrons from NADH, via FMN and iron-sulfur (Fe-S) centers, to quinones in the respiratory chain. The immediate electron acceptor for the enzyme in this species is believed to be ubiquinone. Couples the redox reaction to proton translocation (for every two electrons transferred, four hydrogen ions are translocated across the cytoplasmic membrane), and thus conserves the redox energy in a proton gradient. This is NADH-quinone oxidoreductase subunit I from Methylobacillus flagellatus (strain ATCC 51484 / DSM 6875 / VKM B-1610 / KT).